A 105-amino-acid polypeptide reads, in one-letter code: Cyclotide vibi-J (105 aa).

The first 9 residues, 1-9 (AAFALPALA), serve as a signal peptide directing secretion. A propeptide spanning residues 10–71 (TSFEKDFITH…KSSNSINALG (62 aa)) is cleaved from the precursor. The cyclopeptide (Gly-Asn) cross-link spans 72–102 (GTFPCGESCVWIPCISKVIGCACKSKVCYKN). 3 disulfide bridges follow: Cys-76-Cys-92, Cys-80-Cys-94, and Cys-85-Cys-99. The propeptide occupies 103–105 (SLA).

In terms of processing, this is a cyclic peptide.

Functionally, probably participates in a plant defense mechanism. The sequence is that of Cyclotide vibi-J from Viola biflora (Yellow wood violet).